Consider the following 445-residue polypeptide: Argininosuccinate synthase (445 aa).

ATP contacts are provided by residues 17–25 and alanine 43; that span reads AFSGGLDTS. Tyrosine 99 contributes to the L-citrulline binding site. Glycine 129 and threonine 131 together coordinate ATP. The L-aspartate site is built by threonine 131, asparagine 135, and aspartate 136. Asparagine 135 lines the L-citrulline pocket. Aspartate 136 provides a ligand contact to ATP. Residues arginine 139 and serine 192 each contribute to the L-citrulline site. An ATP-binding site is contributed by aspartate 194. The L-citrulline site is built by threonine 201, glutamate 203, and glutamate 280.

This sequence belongs to the argininosuccinate synthase family. Type 2 subfamily. As to quaternary structure, homotetramer.

The protein resides in the cytoplasm. It carries out the reaction L-citrulline + L-aspartate + ATP = 2-(N(omega)-L-arginino)succinate + AMP + diphosphate + H(+). The protein operates within amino-acid biosynthesis; L-arginine biosynthesis; L-arginine from L-ornithine and carbamoyl phosphate: step 2/3. This is Argininosuccinate synthase from Burkholderia cenocepacia (strain HI2424).